A 121-amino-acid polypeptide reads, in one-letter code: uncharacterized protein (121 aa).

Position 77 to 84 (77 to 84 (AALSFGKT)) interacts with ATP.

This is an uncharacterized protein from Saccharomyces cerevisiae (strain ATCC 204508 / S288c) (Baker's yeast).